The sequence spans 436 residues: Enolase (436 aa).

Q167 is a (2R)-2-phosphoglycerate binding site. The active-site Proton donor is the E209. D246, E291, and D318 together coordinate Mg(2+). The (2R)-2-phosphoglycerate site is built by K343, R372, S373, and K394. Residue K343 is the Proton acceptor of the active site.

This sequence belongs to the enolase family. As to quaternary structure, component of the RNA degradosome, a multiprotein complex involved in RNA processing and mRNA degradation. It depends on Mg(2+) as a cofactor.

The protein localises to the cytoplasm. It localises to the secreted. Its subcellular location is the cell surface. It carries out the reaction (2R)-2-phosphoglycerate = phosphoenolpyruvate + H2O. It participates in carbohydrate degradation; glycolysis; pyruvate from D-glyceraldehyde 3-phosphate: step 4/5. Its function is as follows. Catalyzes the reversible conversion of 2-phosphoglycerate (2-PG) into phosphoenolpyruvate (PEP). It is essential for the degradation of carbohydrates via glycolysis. The chain is Enolase from Actinobacillus pleuropneumoniae serotype 3 (strain JL03).